We begin with the raw amino-acid sequence, 351 residues long: Meiotically up-regulated gene 1 protein (351 aa).

Its subcellular location is the cytoplasm. Functionally, required for correct meiotic chromosome segregation. In Schizosaccharomyces pombe (strain 972 / ATCC 24843) (Fission yeast), this protein is Meiotically up-regulated gene 1 protein (mug1).